A 732-amino-acid chain; its full sequence is Kell blood group glycoprotein (732 aa).

The disordered stretch occupies residues 1–37; that stretch reads MEGGDQSEEEPRERSQAGGMGTLWSQESTPEERLPVE. The Cytoplasmic segment spans residues 1-47; that stretch reads MEGGDQSEEEPRERSQAGGMGTLWSQESTPEERLPVEGSRPWAVARR. Position 7 is a phosphoserine (serine 7). A helical; Signal-anchor for type II membrane protein transmembrane segment spans residues 48 to 67; the sequence is VLTAILILGLLLCFSVLLFY. The Extracellular segment spans residues 68–732; sequence NFQNCGPRPC…LNPSSRCQLW (665 aa). Positions 76-732 constitute a Peptidase M13 domain; it reads PCETSVCLDL…LNPSSRCQLW (657 aa). An intrachain disulfide couples cysteine 77 to cysteine 82. Asparagine 94 and asparagine 115 each carry an N-linked (GlcNAc...) asparagine glycan. 4 disulfide bridges follow: cysteine 100-cysteine 717, cysteine 108-cysteine 682, cysteine 155-cysteine 410, and cysteine 610-cysteine 729. N-linked (GlcNAc...) asparagine; in KEL2 antigen glycosylation occurs at asparagine 191. N-linked (GlcNAc...) asparagine glycosylation occurs at asparagine 345. Histidine 581 contacts Zn(2+). Glutamate 582 is a catalytic residue. Histidine 585 serves as a coordination point for Zn(2+). The N-linked (GlcNAc...) asparagine glycan is linked to asparagine 627. Glutamate 634 serves as a coordination point for Zn(2+). Aspartate 638 (proton donor) is an active-site residue. Positions 684 to 703 are disordered; that stretch reads KPSPQDSHDTHSPPHLRVHG.

The protein belongs to the peptidase M13 family. In terms of assembly, heterodimer with XK; disulfide-linked. Requires Zn(2+) as cofactor. N-glycosylated. Expressed at high levels in erythrocytes and testis (in Sertoli cells), and, at lower levels, in skeletal muscle, tonsils (in follicular dendritic cells), lymph node, spleen and appendix (at protein level). Also expressed in many adult and fetal nonerythroid tissues, including brain, spleen, lymph nodes and bone marrow.

The protein resides in the cell membrane. Zinc endopeptidase with endothelin-3-converting enzyme activity. Cleaves EDN1, EDN2 and EDN3, with a marked preference for EDN3. This chain is Kell blood group glycoprotein (KEL), found in Homo sapiens (Human).